We begin with the raw amino-acid sequence, 319 residues long: tRNA uridine(34) hydroxylase (319 aa).

Residues 127-221 (KQEDTVIIDA…YGKDPEVQGE (95 aa)) enclose the Rhodanese domain. The active-site Cysteine persulfide intermediate is the C181.

It belongs to the TrhO family.

The enzyme catalyses uridine(34) in tRNA + AH2 + O2 = 5-hydroxyuridine(34) in tRNA + A + H2O. In terms of biological role, catalyzes oxygen-dependent 5-hydroxyuridine (ho5U) modification at position 34 in tRNAs. In Bacillus mycoides (strain KBAB4) (Bacillus weihenstephanensis), this protein is tRNA uridine(34) hydroxylase.